The chain runs to 495 residues: Cytochrome P450 monooxygenase 113 (495 aa).

Residues 2–22 (FLQIAACFTVIGLLYGLVSNL) form a helical membrane-spanning segment. C428 is a binding site for heme.

The protein belongs to the cytochrome P450 family. It depends on heme as a cofactor.

The protein localises to the membrane. It participates in secondary metabolite biosynthesis. Cytochrome P450 monooxygenase that is able to use 4-ethoxybenzoic acid as a substrate for oxidation. The protein is Cytochrome P450 monooxygenase 113 of Postia placenta (strain ATCC 44394 / Madison 698-R) (Brown rot fungus).